The sequence spans 191 residues: Acireductone dioxygenase 2 (191 aa).

4 residues coordinate Fe(2+): His102, His104, Glu108, and His146. Ni(2+) contacts are provided by His102, His104, Glu108, and His146.

It belongs to the acireductone dioxygenase (ARD) family. In terms of assembly, monomer. It depends on Fe(2+) as a cofactor. Ni(2+) is required as a cofactor.

It carries out the reaction 1,2-dihydroxy-5-(methylsulfanyl)pent-1-en-3-one + O2 = 3-(methylsulfanyl)propanoate + CO + formate + 2 H(+). The enzyme catalyses 1,2-dihydroxy-5-(methylsulfanyl)pent-1-en-3-one + O2 = 4-methylsulfanyl-2-oxobutanoate + formate + 2 H(+). It participates in amino-acid biosynthesis; L-methionine biosynthesis via salvage pathway; L-methionine from S-methyl-5-thio-alpha-D-ribose 1-phosphate: step 5/6. Catalyzes 2 different reactions between oxygen and the acireductone 1,2-dihydroxy-3-keto-5-methylthiopentene (DHK-MTPene) depending upon the metal bound in the active site. Fe-containing acireductone dioxygenase (Fe-ARD) produces formate and 2-keto-4-methylthiobutyrate (KMTB), the alpha-ketoacid precursor of methionine in the methionine recycle pathway. Ni-containing acireductone dioxygenase (Ni-ARD) produces methylthiopropionate, carbon monoxide and formate, and does not lie on the methionine recycle pathway. This chain is Acireductone dioxygenase 2, found in Nocardia farcinica (strain IFM 10152).